Here is a 245-residue protein sequence, read N- to C-terminus: Small ribosomal subunit protein uS2 (245 aa).

The protein belongs to the universal ribosomal protein uS2 family.

This is Small ribosomal subunit protein uS2 from Pseudomonas fluorescens (strain SBW25).